Here is a 184-residue protein sequence, read N- to C-terminus: dTTP/UTP pyrophosphatase (184 aa).

The active-site Proton acceptor is the D67.

This sequence belongs to the Maf family. YhdE subfamily. Requires a divalent metal cation as cofactor.

The protein localises to the cytoplasm. It carries out the reaction dTTP + H2O = dTMP + diphosphate + H(+). The enzyme catalyses UTP + H2O = UMP + diphosphate + H(+). In terms of biological role, nucleoside triphosphate pyrophosphatase that hydrolyzes dTTP and UTP. May have a dual role in cell division arrest and in preventing the incorporation of modified nucleotides into cellular nucleic acids. The protein is dTTP/UTP pyrophosphatase of Elusimicrobium minutum (strain Pei191).